We begin with the raw amino-acid sequence, 199 residues long: 3-hexulose-6-phosphate isomerase (199 aa).

Residues 44 to 186 (LARQIVQPGR…FQSLWDHTEV (143 aa)) form the SIS domain. Residues Ser-62 and 101 to 106 (SGSGTT) each bind substrate. The active-site Proton acceptor is the Glu-166.

The protein belongs to the SIS family. PHI subfamily.

It catalyses the reaction D-arabino-hex-3-ulose 6-phosphate = beta-D-fructose 6-phosphate. It participates in one-carbon metabolism; formaldehyde assimilation via RuMP pathway; D-fructose 6-phosphate from D-ribulose 5-phosphate and formaldehyde: step 2/2. Its function is as follows. Catalyzes the isomerization between 3-hexulose 6-phosphate and fructose 6-phosphate. In Mycobacterium gastri, this protein is 3-hexulose-6-phosphate isomerase (rmpB).